The primary structure comprises 1193 residues: DNA-directed RNA polymerase subunit beta (1193 aa).

Positions Ile-1152–Glu-1161 are enriched in acidic residues. Residues Ile-1152–Glu-1193 form a disordered region. The segment covering Asp-1184–Glu-1193 has biased composition (basic and acidic residues).

This sequence belongs to the RNA polymerase beta chain family. In terms of assembly, the RNAP catalytic core consists of 2 alpha, 1 beta, 1 beta' and 1 omega subunit. When a sigma factor is associated with the core the holoenzyme is formed, which can initiate transcription.

It carries out the reaction RNA(n) + a ribonucleoside 5'-triphosphate = RNA(n+1) + diphosphate. In terms of biological role, DNA-dependent RNA polymerase catalyzes the transcription of DNA into RNA using the four ribonucleoside triphosphates as substrates. In Bacillus pumilus (strain SAFR-032), this protein is DNA-directed RNA polymerase subunit beta.